The primary structure comprises 243 residues: Uridylate kinase (243 aa).

15 to 18 contributes to the ATP binding site; sequence KLSG. Residue Gly56 coordinates UMP. Positions 57 and 61 each coordinate ATP. 138 to 145 is a UMP binding site; it reads TGNPYFST. Positions 166, 172, and 175 each coordinate ATP.

It belongs to the UMP kinase family. Homohexamer.

The protein localises to the cytoplasm. The enzyme catalyses UMP + ATP = UDP + ADP. Its pathway is pyrimidine metabolism; CTP biosynthesis via de novo pathway; UDP from UMP (UMPK route): step 1/1. Its activity is regulated as follows. Inhibited by UTP. Functionally, catalyzes the reversible phosphorylation of UMP to UDP. The polypeptide is Uridylate kinase (Mycoplasma genitalium (strain ATCC 33530 / DSM 19775 / NCTC 10195 / G37) (Mycoplasmoides genitalium)).